We begin with the raw amino-acid sequence, 141 residues long: Large ribosomal subunit protein uL11 (141 aa).

This sequence belongs to the universal ribosomal protein uL11 family. In terms of assembly, part of the ribosomal stalk of the 50S ribosomal subunit. Interacts with L10 and the large rRNA to form the base of the stalk. L10 forms an elongated spine to which L12 dimers bind in a sequential fashion forming a multimeric L10(L12)X complex. In terms of processing, one or more lysine residues are methylated.

Forms part of the ribosomal stalk which helps the ribosome interact with GTP-bound translation factors. This is Large ribosomal subunit protein uL11 from Streptococcus pyogenes serotype M1.